A 296-amino-acid polypeptide reads, in one-letter code: Aquaporin NIP1-1 (296 aa).

M1 bears the N-acetylmethionine mark. Helical transmembrane passes span 57 to 77 and 84 to 104; these read LIAEFLGTYFLVFTGCASVVV and VVTLPGIAIVWGLTIMVLIYS. An NPA 1 motif is present at residues 114 to 116; sequence NPA. The next 3 membrane-spanning stretches (helical) occupy residues 136-156, 180-200, and 205-225; these read VISQVIGSTLAAATLRLLFGL, AFTMEFIVTFYLMFIISGVAT, and IGELAGLAIGSTVLLNVLIAA. The short motif at 233 to 235 is the NPA 2 element; that stretch reads NPG. A helical membrane pass occupies residues 249 to 269; the sequence is GIWIYLVAPTLGAIAGAWVYN. S286 carries the post-translational modification Phosphoserine.

It belongs to the MIP/aquaporin (TC 1.A.8) family. NIP (TC 1.A.8.12) subfamily. In terms of tissue distribution, expressed in roots.

It localises to the membrane. Functionally, water channel probably required to promote glycerol permeability and water transport across cell membranes. The protein is Aquaporin NIP1-1 (NIP1-1) of Arabidopsis thaliana (Mouse-ear cress).